Reading from the N-terminus, the 104-residue chain is SOSS complex subunit C (104 aa).

It belongs to the SOSS-C family. As to quaternary structure, belongs to the multiprotein complex Integrator. Component of the SOSS complex, composed of SOSS-B (SOSS-B1/NABP2 or SOSS-B2/NABP1), SOSS-A/INTS3 and SOSS-C/INIP.

The protein localises to the nucleus. Its function is as follows. Component of the SOSS complex, a multiprotein complex that functions downstream of the MRN complex to promote DNA repair and G2/M checkpoint. The SOSS complex associates with single-stranded DNA at DNA lesions and influences diverse endpoints in the cellular DNA damage response including cell-cycle checkpoint activation, recombinational repair and maintenance of genomic stability. Required for efficient homologous recombination-dependent repair of double-strand breaks (DSBs). This Taeniopygia guttata (Zebra finch) protein is SOSS complex subunit C (INIP).